A 396-amino-acid polypeptide reads, in one-letter code: Phosphoglycerate kinase (396 aa).

Substrate is bound by residues 21 to 23 (DLN), arginine 36, 59 to 62 (HFGR), arginine 118, and arginine 151. ATP contacts are provided by residues lysine 201, glutamate 323, and 353–356 (GGDT).

Belongs to the phosphoglycerate kinase family. In terms of assembly, monomer.

It is found in the cytoplasm. It carries out the reaction (2R)-3-phosphoglycerate + ATP = (2R)-3-phospho-glyceroyl phosphate + ADP. It participates in carbohydrate degradation; glycolysis; pyruvate from D-glyceraldehyde 3-phosphate: step 2/5. This Brucella melitensis biotype 1 (strain ATCC 23456 / CCUG 17765 / NCTC 10094 / 16M) protein is Phosphoglycerate kinase.